A 430-amino-acid chain; its full sequence is Acetyl-CoA acetyltransferase FG05087, mitochondrial (430 aa).

A mitochondrion-targeting transit peptide spans methionine 1–arginine 32. Residue cysteine 122 is the Acyl-thioester intermediate of the active site. A K(+)-binding site is contributed by tyrosine 217. Lysine 260 contacts CoA. K(+) is bound at residue alanine 278. Position 282 (serine 282) interacts with CoA. Active-site proton acceptor residues include histidine 385 and cysteine 413. A chloride-binding site is contributed by asparagine 414.

It belongs to the thiolase-like superfamily. Thiolase family. In terms of assembly, homotetramer. K(+) is required as a cofactor.

The protein resides in the mitochondrion. The enzyme catalyses 2 acetyl-CoA = acetoacetyl-CoA + CoA. Functionally, mitochondrial acetyl-CoA acetyltransferase that catalyzes both the formation and degradation of acetoacetyl-CoA. Seems not to be involved in ergosterol biosynthesis. Plays an important role in growth, morphogenesis and maintaining mitochondrial function including the response to oxidative stresses. The protein is Acetyl-CoA acetyltransferase FG05087, mitochondrial of Gibberella zeae (strain ATCC MYA-4620 / CBS 123657 / FGSC 9075 / NRRL 31084 / PH-1) (Wheat head blight fungus).